A 323-amino-acid polypeptide reads, in one-letter code: Cytochrome c biogenesis protein CcsA (323 aa).

Transmembrane regions (helical) follow at residues 18–38 (VSVV…VGLY), 43–63 (KGML…WVYW), 71–91 (LYES…IPSF), 99–119 (LNVI…SGLL), 146–166 (LGYA…IIIF), 227–247 (VISL…VWAN), 256–276 (WDPK…YLHI), and 288–308 (AIVA…VNLL).

This sequence belongs to the CcmF/CycK/Ccl1/NrfE/CcsA family. May interact with Ccs1.

It localises to the plastid. It is found in the chloroplast thylakoid membrane. In terms of biological role, required during biogenesis of c-type cytochromes (cytochrome c6 and cytochrome f) at the step of heme attachment. This chain is Cytochrome c biogenesis protein CcsA, found in Spinacia oleracea (Spinach).